The following is an 84-amino-acid chain: Small ribosomal subunit protein eS27-like (84 aa).

A compositionally biased stretch (basic and acidic residues) spans 1–16 (MPLARDLLHPSLDEEK). The interval 1–23 (MPLARDLLHPSLDEEKKKHKKKR) is disordered. Residues 38-60 (PGCYKITTVFSHAQTVVLCVGCS) form a C4-type zinc finger.

It belongs to the eukaryotic ribosomal protein eS27 family. Requires Zn(2+) as cofactor.

The protein is Small ribosomal subunit protein eS27-like (RPS27L) of Bos taurus (Bovine).